The following is a 528-amino-acid chain: MDVEGAFADEEELAPHGGWASKDFDPSEFGYDDDFAPDDSDEDEDDDDYEFDEDDFAAPDFGEDYTEEEWEELERSLGIERREHLEESLCTVAIVGRPNVGKSTLVNRFIGRREAVVEDFPGVTRDRISYLSDWGGQRFWVQDTGGWDPNVKGIHASIAHQAELAMASADVIVFVVDTKVGITETDAVMARKLKRADVPVILVANKFDSDSQWADMAEFYALGLGDPFPVSAQHGRGGADVLDKILESFPEEPRAKSIVEGPRRVALVGKPNVGKSSLLNKFAGEERSVVDNVAGTTVDPVDSIIQLDQKMWKFIDTAGLRKKVKTATGHEFYASLRTRSVIDSAEVCVLLIDSSEPITEQDQRVLAMITDAGKALVVAFNKWDLMDEDRRWELDRELDLQLAHIPWAKRINISAKTGRALQRLEPAMIEALENWDRRVSTGQLNNWLREAIAANPPPMRGGRLPRVLFATQASTRPPVIVLFTTGFLEAGYRRYLERKFRERFGFNGTPIRIAVRVRERRGKGGKKQ.

Acidic residues-rich tracts occupy residues Met-1 to Glu-12 and Gly-30 to Gly-62. The segment at Met-1–Gly-62 is disordered. EngA-type G domains follow at residues Cys-90–Pro-253 and Arg-263–Asp-436. GTP is bound by residues Gly-96 to Ser-103, Asp-143 to Trp-147, Asn-205 to Asp-208, Gly-269 to Ser-276, Asp-316 to Leu-320, and Asn-381 to Asp-384. The 83-residue stretch at Arg-437–Glu-519 folds into the KH-like domain.

Belongs to the TRAFAC class TrmE-Era-EngA-EngB-Septin-like GTPase superfamily. EngA (Der) GTPase family. Associates with the 50S ribosomal subunit.

Its function is as follows. GTPase that plays an essential role in the late steps of ribosome biogenesis. The chain is GTPase Der from Corynebacterium efficiens (strain DSM 44549 / YS-314 / AJ 12310 / JCM 11189 / NBRC 100395).